A 198-amino-acid polypeptide reads, in one-letter code: Probable GTP-binding protein EngB (198 aa).

An EngB-type G domain is found at 21–195 (NFSEVAFLGR…EDIIIDQTLG (175 aa)). Residues 29–36 (GRSNVGKS), 56–60 (GKTQL), 81–84 (DLPG), 151–154 (TKCD), and 174–176 (VSN) each bind GTP. The Mg(2+) site is built by serine 36 and threonine 58.

The protein belongs to the TRAFAC class TrmE-Era-EngA-EngB-Septin-like GTPase superfamily. EngB GTPase family. It depends on Mg(2+) as a cofactor.

In terms of biological role, necessary for normal cell division and for the maintenance of normal septation. The protein is Probable GTP-binding protein EngB of Campylobacter jejuni subsp. jejuni serotype O:6 (strain 81116 / NCTC 11828).